Here is a 1230-residue protein sequence, read N- to C-terminus: Soluble starch synthase 3, chloroplastic/amyloplastic (1230 aa).

Residues 1-60 (MDVPFPLHRSLSCTSVSNAITHLKIKPILGFVSHGTTSLSVQSSSWRKDGMVTGVSFSIC) constitute a chloroplast transit peptide. The disordered stretch occupies residues 66–189 (RRRRKVSTPR…KDAVKLNKSK (124 aa)). Over residues 124–145 (VEARVETSDDDTKGVVRDHKFL) the composition is skewed to basic and acidic residues. Over residues 152–170 (NGSTKSISMSPVRVSSQFV) the composition is skewed to polar residues. Basic and acidic residues predominate over residues 177 to 189 (GDDKDAVKLNKSK). K794 is an ADP-alpha-D-glucose binding site.

The protein belongs to the glycosyltransferase 1 family. Bacterial/plant glycogen synthase subfamily. As to expression, tuber, sink and source leaves.

It is found in the plastid. The protein localises to the chloroplast. It localises to the amyloplast. It carries out the reaction [(1-&gt;4)-alpha-D-glucosyl](n) + ADP-alpha-D-glucose = [(1-&gt;4)-alpha-D-glucosyl](n+1) + ADP + H(+). It functions in the pathway glycan biosynthesis; starch biosynthesis. Its function is as follows. May account for most of the soluble starch synthase activity in the tubers. Contributes only a tiny percentage of the granule-bound activity, but may also contribute to the deposition of transient starch in chloroplasts of leaves. The sequence is that of Soluble starch synthase 3, chloroplastic/amyloplastic (SS3) from Solanum tuberosum (Potato).